We begin with the raw amino-acid sequence, 321 residues long: Olfactory receptor 14J1 (321 aa).

Residues 1 to 23 (MVNLTSMSGFLLMGFSDERKLQI) lie on the Extracellular side of the membrane. Residue N3 is glycosylated (N-linked (GlcNAc...) asparagine). The helical transmembrane segment at 24–44 (LHALVFLVTYLLALTGNLLII) threads the bilayer. Topologically, residues 45–52 (TIITVDRR) are cytoplasmic. Residues 53 to 73 (LHSPMYYFLKHLSLLDLCFIS) traverse the membrane as a helical segment. Over 74 to 97 (VTVPQSIANSLMGNGYISLVQCIL) the chain is Extracellular. Cysteines 95 and 187 form a disulfide. Residues 98–118 (QVFFFIALASSEVAILTVMSY) form a helical membrane-spanning segment. Residues 119 to 137 (DRYAAICQPLHYETIMDPR) lie on the Cytoplasmic side of the membrane. Residues 138–158 (ACRHAVIAVWIAGGLSGLMHA) form a helical membrane-spanning segment. Residues 159-194 (AINFSIPLCGKRVIHQFFCDVPQMLKLACSYEFINE) are Extracellular-facing. The chain crosses the membrane as a helical span at residues 195–215 (IALAAFTTSAAFICLISIVLS). At 216–235 (YIRIFSTVLRIPSAEGRTKV) the chain is on the cytoplasmic side. A helical membrane pass occupies residues 236–256 (FSTCLPHLFVATFFLSAAGFE). At 257–269 (FLRLPSDSSSTVD) the chain is on the extracellular side. A helical transmembrane segment spans residues 270–290 (LVFSVFYTVIPPTLNPVIYSL). Over 291 to 321 (RNDSMKAALRKMLSKEELPQRKMCLKAMFKL) the chain is Cytoplasmic.

This sequence belongs to the G-protein coupled receptor 1 family.

Its subcellular location is the cell membrane. In terms of biological role, odorant receptor. The chain is Olfactory receptor 14J1 (OR14J1) from Homo sapiens (Human).